Reading from the N-terminus, the 270-residue chain is UPF0354 protein BCA_4815 (270 aa).

The protein belongs to the UPF0354 family.

This chain is UPF0354 protein BCA_4815, found in Bacillus cereus (strain 03BB102).